Here is a 317-residue protein sequence, read N- to C-terminus: R-spondin-3 (317 aa).

The signal sequence occupies residues 1–20 (MQLQLISIVLILHFMEYTNC). FU repeat units lie at residues 34-86 (SGVS…GFYG), 92-135 (RNDC…GLVP), and 139-183 (KKEC…EFEP). 11 disulfide bridges follow: Cys-41–Cys-48, Cys-45–Cys-54, Cys-57–Cys-76, Cys-80–Cys-95, Cys-98–Cys-105, Cys-102–Cys-111, Cys-114–Cys-125, Cys-129–Cys-189, Cys-195–Cys-237, Cys-206–Cys-213, and Cys-246–Cys-253. N-linked (GlcNAc...) asparagine glycosylation is present at Asn-184. Residues 194 to 254 (HCEVSEWSEW…ECFVKKKRCK (61 aa)) form the TSP type-1 domain. A compositionally biased stretch (basic residues) spans 251–268 (KRCKPPKGQRRGEKKKRF). Residues 251–317 (KRCKPPKGQR…RDQSRDAGTV (67 aa)) form a disordered region. The span at 274-303 (VTAEARRERKREREKETIDREESENRNKTE) shows a compositional bias: basic and acidic residues. Asn-300 is a glycosylation site (N-linked (GlcNAc...) asparagine).

Belongs to the R-spondin family. As to quaternary structure, binds heparin.

The protein localises to the secreted. Functionally, activator of the canonical Wnt signaling pathway by acting as a ligand for lgr4-6 receptors, which acts as a key regulator of angiogenesis. Upon binding to lgr4-6 (lgr4, lgr5 or lgr6), lgr4-6 associate with phosphorylated lrp6 and frizzled receptors that are activated by extracellular Wnt receptors, triggering the canonical Wnt signaling pathway to increase expression of target genes. Acts both in the canonical. Wnt/beta-catenin-dependent pathway and in non-canonical Wnt signaling pathway. Acts as a key regulator of angiogenesis by controlling vascular stability and pruning: acts by activating the non-canonical Wnt signaling pathway in endothelial cells. Can also amplify Wnt signaling pathway independently of LGR4-6 receptors, possibly by acting as a direct antagonistic ligand to RNF43 and ZNRF3. The polypeptide is R-spondin-3 (rspo3) (Danio rerio (Zebrafish)).